The primary structure comprises 201 residues: Histone chaperone asf1a-A (201 aa).

Belongs to the ASF1 family. As to quaternary structure, interacts with histone H3 (including both histone H3.1 and H3.3) and histone H4. Interacts with hira and p60.

It is found in the nucleus. Histone chaperone that facilitates histone deposition and histone exchange and removal during nucleosome assembly and disassembly. Not critical for histone deposition during nucleosome assembly. This chain is Histone chaperone asf1a-A (asf1aa), found in Xenopus laevis (African clawed frog).